Consider the following 370-residue polypeptide: D-alanine--D-alanine ligase (370 aa).

Positions lysine 144–aspartate 352 constitute an ATP-grasp domain. Glutamate 177–glutamate 232 is an ATP binding site. Mg(2+)-binding residues include aspartate 306, glutamate 319, and asparagine 321.

This sequence belongs to the D-alanine--D-alanine ligase family. Mg(2+) serves as cofactor. Mn(2+) is required as a cofactor.

Its subcellular location is the cytoplasm. It catalyses the reaction 2 D-alanine + ATP = D-alanyl-D-alanine + ADP + phosphate + H(+). Its pathway is cell wall biogenesis; peptidoglycan biosynthesis. Its function is as follows. Cell wall formation. The polypeptide is D-alanine--D-alanine ligase (Listeria monocytogenes serovar 1/2a (strain ATCC BAA-679 / EGD-e)).